Consider the following 254-residue polypeptide: 3-deoxy-manno-octulosonate cytidylyltransferase (254 aa).

This sequence belongs to the KdsB family.

It is found in the cytoplasm. The catalysed reaction is 3-deoxy-alpha-D-manno-oct-2-ulosonate + CTP = CMP-3-deoxy-beta-D-manno-octulosonate + diphosphate. The protein operates within nucleotide-sugar biosynthesis; CMP-3-deoxy-D-manno-octulosonate biosynthesis; CMP-3-deoxy-D-manno-octulosonate from 3-deoxy-D-manno-octulosonate and CTP: step 1/1. Its pathway is bacterial outer membrane biogenesis; lipopolysaccharide biosynthesis. Functionally, activates KDO (a required 8-carbon sugar) for incorporation into bacterial lipopolysaccharide in Gram-negative bacteria. The chain is 3-deoxy-manno-octulosonate cytidylyltransferase from Polynucleobacter necessarius subsp. necessarius (strain STIR1).